A 324-amino-acid chain; its full sequence is Lactonase drp35 (324 aa).

Residues Glu47, Ser109, Gly111, Asp129, Thr132, Tyr134, Asp137, Asn184, Asp235, and Ser236 each coordinate Ca(2+). Catalysis depends on Asp235, which acts as the Proton donor.

This sequence belongs to the SMP-30/CGR1 family. Requires Ca(2+) as cofactor.

The protein resides in the cytoplasm. Exhibits lactonase activity. Acts in cells with perturbed membrane integrity and is possibly related to the membrane homeostasis. The protein is Lactonase drp35 (drp35) of Staphylococcus aureus (strain USA300).